A 431-amino-acid chain; its full sequence is Metal-binding activator 1 (431 aa).

Residues 1-40 (MILIDDIKYACMECVRGHRSSSCKHHERPLLQVRSKGRPG) constitute a DNA-binding region (copper-fist). Positions 11, 14, 23, and 25 each coordinate Zn(2+).

The protein resides in the nucleus. Copper ion-sensing transcription factor which activates transcription of the CTR1 copper transporter under low-copper conditions. Promotes filamentous and invasive growth. The protein is Metal-binding activator 1 (MAC1) of Candida albicans (strain SC5314 / ATCC MYA-2876) (Yeast).